Consider the following 84-residue polypeptide: Acyl carrier protein (84 aa).

The Carrier domain occupies 4 to 80 (SETFEKVKKI…EAVDYINNQV (77 aa)). Ser40 bears the O-(pantetheine 4'-phosphoryl)serine mark.

Belongs to the acyl carrier protein (ACP) family. In terms of processing, 4'-phosphopantetheine is transferred from CoA to a specific serine of apo-ACP by AcpS. This modification is essential for activity because fatty acids are bound in thioester linkage to the sulfhydryl of the prosthetic group.

Its subcellular location is the cytoplasm. It functions in the pathway lipid metabolism; fatty acid biosynthesis. Its function is as follows. Carrier of the growing fatty acid chain in fatty acid biosynthesis. The chain is Acyl carrier protein from Nostoc sp. (strain PCC 7120 / SAG 25.82 / UTEX 2576).